A 130-amino-acid polypeptide reads, in one-letter code: Small ribosomal subunit protein uS8 (130 aa).

The protein belongs to the universal ribosomal protein uS8 family. Part of the 30S ribosomal subunit. Contacts proteins S5 and S12.

One of the primary rRNA binding proteins, it binds directly to 16S rRNA central domain where it helps coordinate assembly of the platform of the 30S subunit. This chain is Small ribosomal subunit protein uS8, found in Photorhabdus laumondii subsp. laumondii (strain DSM 15139 / CIP 105565 / TT01) (Photorhabdus luminescens subsp. laumondii).